We begin with the raw amino-acid sequence, 316 residues long: Olfactory receptor 10H4 (316 aa).

The Extracellular segment spans residues 1–26 (MPSQNYSIISEFNLFGFSAFPQHLLP). Asn-5 carries N-linked (GlcNAc...) asparagine glycosylation. Residues 27-47 (ILFLLYLLMFLFTLLGNLLIM) traverse the membrane as a helical segment. Residues 48-55 (ATIWIEHR) lie on the Cytoplasmic side of the membrane. A helical transmembrane segment spans residues 56–76 (LHTPMYLFLCTLSVSEILFTV). The Extracellular portion of the chain corresponds to 77 to 100 (AITPRMLADLLSTHHSITFVACAN). Cysteines 98 and 190 form a disulfide. Residues 101 to 121 (QMFFSFMFGFTHSFLLLVMGY) traverse the membrane as a helical segment. Residues 122 to 140 (DRYVAICHPLRYNVLMSPR) lie on the Cytoplasmic side of the membrane. The chain crosses the membrane as a helical span at residues 141–161 (DCAHLVACTWAGGSVMGMMVT). Residues 162–198 (TIVFHLTFCGSNVIHHFFCHVLSLLKLACENKTSSVI) are Extracellular-facing. A helical membrane pass occupies residues 199–219 (MGVMLVCVTALIGCLFLIILS). Residues 220-239 (YVFIVAAILRIPSAEGRHKT) lie on the Cytoplasmic side of the membrane. Residues 240 to 260 (FSTCVSHLTVVVTHYSFASFI) traverse the membrane as a helical segment. The Extracellular segment spans residues 261-273 (YLKPKGLHSMYSD). Residues 274 to 294 (ALMATTYTVFTPFLSPIIFSL) traverse the membrane as a helical segment. The Cytoplasmic portion of the chain corresponds to 295–316 (RNKELKNAINKNFYRKFCPPSS).

It belongs to the G-protein coupled receptor 1 family.

Its subcellular location is the cell membrane. Odorant receptor. This Homo sapiens (Human) protein is Olfactory receptor 10H4 (OR10H4).